Reading from the N-terminus, the 395-residue chain is Argininosuccinate synthase (395 aa).

ATP is bound by residues 6 to 14 (AYSGGLDTS) and Ala-33. An L-citrulline-binding site is contributed by Tyr-84. Gly-114 lines the ATP pocket. 3 residues coordinate L-aspartate: Thr-116, Asn-120, and Asp-121. Position 120 (Asn-120) interacts with L-citrulline. Positions 124, 173, 182, 258, and 270 each coordinate L-citrulline.

It belongs to the argininosuccinate synthase family. Type 1 subfamily. In terms of assembly, homotetramer.

It is found in the cytoplasm. The catalysed reaction is L-citrulline + L-aspartate + ATP = 2-(N(omega)-L-arginino)succinate + AMP + diphosphate + H(+). It participates in amino-acid biosynthesis; L-arginine biosynthesis; L-arginine from L-ornithine and carbamoyl phosphate: step 2/3. In Rhodococcoides fascians (Rhodococcus fascians), this protein is Argininosuccinate synthase.